We begin with the raw amino-acid sequence, 403 residues long: tRNA(Met) cytidine acetate ligase (403 aa).

Residues 7–20, glycine 102, asparagine 168, and arginine 193 each bind ATP; that span reads IVEY…HLYH.

This sequence belongs to the TmcAL family.

It localises to the cytoplasm. It catalyses the reaction cytidine(34) in elongator tRNA(Met) + acetate + ATP = N(4)-acetylcytidine(34) in elongator tRNA(Met) + AMP + diphosphate. Its function is as follows. Catalyzes the formation of N(4)-acetylcytidine (ac(4)C) at the wobble position of elongator tRNA(Met), using acetate and ATP as substrates. First activates an acetate ion to form acetyladenylate (Ac-AMP) and then transfers the acetyl group to tRNA to form ac(4)C34. The polypeptide is tRNA(Met) cytidine acetate ligase (Clostridium tetani (strain Massachusetts / E88)).